The following is a 432-amino-acid chain: Asparagine--tRNA ligase (432 aa).

This sequence belongs to the class-II aminoacyl-tRNA synthetase family. As to quaternary structure, homodimer.

Its subcellular location is the cytoplasm. It carries out the reaction tRNA(Asn) + L-asparagine + ATP = L-asparaginyl-tRNA(Asn) + AMP + diphosphate + H(+). This chain is Asparagine--tRNA ligase, found in Lactobacillus johnsonii (strain CNCM I-12250 / La1 / NCC 533).